Here is a 140-residue protein sequence, read N- to C-terminus: Large ribosomal subunit protein uL16 (140 aa).

This sequence belongs to the universal ribosomal protein uL16 family. As to quaternary structure, part of the 50S ribosomal subunit.

Functionally, binds 23S rRNA and is also seen to make contacts with the A and possibly P site tRNAs. In Geotalea uraniireducens (strain Rf4) (Geobacter uraniireducens), this protein is Large ribosomal subunit protein uL16.